We begin with the raw amino-acid sequence, 673 residues long: F-box/LRR-repeat protein 17 (673 aa).

Positions 1 to 39 (MGHVAPHASKKEHVAPHAAEKDHVAPHASKKEHVAPHAA) are disordered. Positions 9 to 39 (SKKEHVAPHAAEKDHVAPHASKKEHVAPHAA) are enriched in basic and acidic residues. The F-box domain occupies 291-338 (PLHINQLPSSLLLKIFSNLSLNERCILASLVCKYWRDLCLDSQFWKQL).

Belongs to the FBXL17 family. As to quaternary structure, part of the SCF (SKP1-CUL1-F-box) E3 ubiquitin-protein ligase complex SCF(FBXL17). Interacts with BTB domain-containing proteins; specifically recognizes and binds a conserved degron of non-consecutive residues present at the interface of BTB dimers of aberrant composition. Expressed in the neuro-ectoderm of embryos.

The protein localises to the cytoplasm. It localises to the nucleus. Functionally, substrate-recognition component of the SCF(FBXL17) E3 ubiquitin ligase complex, a key component of a quality control pathway required to ensure functional dimerization of BTB domain-containing proteins (dimerization quality control, DQC). FBXL17 specifically recognizes and binds a conserved degron of non-consecutive residues present at the interface of BTB dimers of aberrant composition: aberrant BTB dimer are then ubiquitinated by the SCF(FBXL17) complex and degraded by the proteasome. The ability of the SCF(FBXL17) complex to eliminate compromised BTB dimers is required for the differentiation and survival of neural crest and neuronal cells. In Xenopus laevis (African clawed frog), this protein is F-box/LRR-repeat protein 17.